Here is a 94-residue protein sequence, read N- to C-terminus: Non-specific lipid-transfer protein 1 (94 aa).

Cystine bridges form between Cys-4–Cys-53, Cys-14–Cys-30, Cys-31–Cys-76, and Cys-51–Cys-90.

Its function is as follows. Plant non-specific lipid-transfer proteins transfer phospholipids as well as galactolipids across membranes. May play a role in wax or cutin deposition in the cell walls of expanding epidermal cells and certain secretory tissues. The chain is Non-specific lipid-transfer protein 1 from Amaranthus hypochondriacus (Prince-of-Wales feather).